A 229-amino-acid chain; its full sequence is Orotate phosphoribosyltransferase (229 aa).

5-phospho-alpha-D-ribose 1-diphosphate-binding positions include Arg107, Lys108, Lys111, His113, and 133 to 141 (EDLTTAGGS). Thr137 lines the orotate pocket.

Belongs to the purine/pyrimidine phosphoribosyltransferase family. PyrE subfamily. Homodimer. Mg(2+) is required as a cofactor.

It catalyses the reaction orotidine 5'-phosphate + diphosphate = orotate + 5-phospho-alpha-D-ribose 1-diphosphate. Its pathway is pyrimidine metabolism; UMP biosynthesis via de novo pathway; UMP from orotate: step 1/2. In terms of biological role, catalyzes the transfer of a ribosyl phosphate group from 5-phosphoribose 1-diphosphate to orotate, leading to the formation of orotidine monophosphate (OMP). The protein is Orotate phosphoribosyltransferase of Rhizobium johnstonii (strain DSM 114642 / LMG 32736 / 3841) (Rhizobium leguminosarum bv. viciae).